The sequence spans 236 residues: UPF0502 protein Bpro_3844 (236 aa).

It belongs to the UPF0502 family.

This is UPF0502 protein Bpro_3844 from Polaromonas sp. (strain JS666 / ATCC BAA-500).